The following is a 350-amino-acid chain: Phosphotriesterase-related protein (350 aa).

Residues H22, H24, E169, H201, H230, and D298 each contribute to the a divalent metal cation site.

Belongs to the metallo-dependent hydrolases superfamily. Phosphotriesterase family. It depends on a divalent metal cation as a cofactor.

This Drosophila pseudoobscura pseudoobscura (Fruit fly) protein is Phosphotriesterase-related protein.